The chain runs to 312 residues: Aspartate carbamoyltransferase catalytic subunit (312 aa).

Carbamoyl phosphate-binding residues include R55 and T56. K83 provides a ligand contact to L-aspartate. Carbamoyl phosphate-binding residues include R105, H133, and Q136. Residues R166 and R220 each coordinate L-aspartate. Residues G261 and P262 each coordinate carbamoyl phosphate.

Belongs to the aspartate/ornithine carbamoyltransferase superfamily. ATCase family. Heterododecamer (2C3:3R2) of six catalytic PyrB chains organized as two trimers (C3), and six regulatory PyrI chains organized as three dimers (R2).

The enzyme catalyses carbamoyl phosphate + L-aspartate = N-carbamoyl-L-aspartate + phosphate + H(+). The protein operates within pyrimidine metabolism; UMP biosynthesis via de novo pathway; (S)-dihydroorotate from bicarbonate: step 2/3. Its function is as follows. Catalyzes the condensation of carbamoyl phosphate and aspartate to form carbamoyl aspartate and inorganic phosphate, the committed step in the de novo pyrimidine nucleotide biosynthesis pathway. This is Aspartate carbamoyltransferase catalytic subunit from Prosthecochloris aestuarii (strain DSM 271 / SK 413).